The chain runs to 410 residues: Transposase for insertion sequence element IS801 (410 aa).

This sequence belongs to the transposase 32 family.

Functionally, involved in the transposition of the insertion sequence. This Pseudomonas savastanoi pv. phaseolicola (Pseudomonas syringae pv. phaseolicola) protein is Transposase for insertion sequence element IS801.